The chain runs to 254 residues: NFU1 iron-sulfur cluster scaffold homolog, mitochondrial (254 aa).

The transit peptide at M1–W9 directs the protein to the mitochondrion. The nifU stretch occupies residues I173–V241. 2 residues coordinate [4Fe-4S] cluster: C210 and C213.

This sequence belongs to the NifU family. Monomer and homohexamer; the apo-NFU1 is a monomer, while the holo-NFU1 is a hexamer composed of a trimer of dimer that is probably linked by some 4Fe-4S cluster. Interacts with HIRA and EPM2A/laforin. Interacts with BOLA3. Interacts with HSPA9. In terms of tissue distribution, ubiquitous. Expression in adult lung is weak compared to fetal lung.

Its subcellular location is the mitochondrion. The protein localises to the cytoplasm. The protein resides in the cytosol. Iron-sulfur cluster scaffold protein which can assemble [4Fe-4S] clusters and deliver them to target proteins. This Homo sapiens (Human) protein is NFU1 iron-sulfur cluster scaffold homolog, mitochondrial (NFU1).